The sequence spans 155 residues: Isotocin-neurophysin IT 1 (155 aa).

Positions 1–19 (MTGTAISVCLLFLLSVCSA) are cleaved as a signal peptide. Cys20 and Cys25 are oxidised to a cystine. Residue Gly28 is modified to Glycine amide. 7 disulfide bridges follow: Cys41–Cys85, Cys44–Cys58, Cys52–Cys75, Cys59–Cys65, Cys92–Cys105, Cys99–Cys117, and Cys106–Cys111.

This sequence belongs to the vasopressin/oxytocin family. Post-translationally, seven disulfide bonds are present in neurophysin.

In terms of biological role, isotocin causes contraction of smooth muscles. The sequence is that of Isotocin-neurophysin IT 1 from Takifugu rubripes (Japanese pufferfish).